The chain runs to 483 residues: Zinc metalloproteinase/disintegrin (483 aa).

An N-terminal signal peptide occupies residues 1–20 (MIQVLLVTVCLAVFPYQGSS). Positions 21–190 (IILESGNVND…KASQLYLTPE (170 aa)) are excised as a propeptide. The 199-residue stretch at 197–395 (RYVKLAIVVD…YKPQCILNAP (199 aa)) folds into the Peptidase M12B domain. Intrachain disulfides connect cysteine 308-cysteine 390, cysteine 352-cysteine 374, and cysteine 354-cysteine 357. Residue histidine 333 participates in Zn(2+) binding. Residue glutamate 334 is part of the active site. 2 residues coordinate Zn(2+): histidine 337 and histidine 343. Positions 396-411 (LRTDTVSTPVSGNELL) are excised as a propeptide. Residues 403–483 (TPVSGNELLE…SDDCPRWNDL (81 aa)) form the Disintegrin domain. 6 disulfides stabilise this stretch: cysteine 417/cysteine 432, cysteine 419/cysteine 427, cysteine 426/cysteine 449, cysteine 440/cysteine 446, cysteine 445/cysteine 470, and cysteine 458/cysteine 477. The Cell attachment site motif lies at 462–464 (RGD).

This sequence belongs to the venom metalloproteinase (M12B) family. P-II subfamily. P-IIa sub-subfamily. Monomer. It depends on Zn(2+) as a cofactor. As to expression, expressed by the venom gland.

The protein localises to the secreted. Functionally, impairs hemostasis in the envenomed animal. In terms of biological role, inhibits ADP- and collagen-induced human platelet aggregation with IC(50) of 123 and 135 nM, respectively. Inhibits sperm-egg binding in a concentration-dependent manner, but has no effect on the fusion of sperm-egg. The polypeptide is Zinc metalloproteinase/disintegrin (Protobothrops jerdonii (Jerdon's pitviper)).